We begin with the raw amino-acid sequence, 151 residues long: Large ribosomal subunit protein bL9 (151 aa).

The protein belongs to the bacterial ribosomal protein bL9 family.

Functionally, binds to the 23S rRNA. The polypeptide is Large ribosomal subunit protein bL9 (Mycolicibacterium smegmatis (strain ATCC 700084 / mc(2)155) (Mycobacterium smegmatis)).